A 233-amino-acid chain; its full sequence is Aspartate/glutamate leucyltransferase (233 aa).

Belongs to the R-transferase family. Bpt subfamily.

The protein resides in the cytoplasm. The catalysed reaction is N-terminal L-glutamyl-[protein] + L-leucyl-tRNA(Leu) = N-terminal L-leucyl-L-glutamyl-[protein] + tRNA(Leu) + H(+). It carries out the reaction N-terminal L-aspartyl-[protein] + L-leucyl-tRNA(Leu) = N-terminal L-leucyl-L-aspartyl-[protein] + tRNA(Leu) + H(+). Its function is as follows. Functions in the N-end rule pathway of protein degradation where it conjugates Leu from its aminoacyl-tRNA to the N-termini of proteins containing an N-terminal aspartate or glutamate. The sequence is that of Aspartate/glutamate leucyltransferase from Vibrio parahaemolyticus serotype O3:K6 (strain RIMD 2210633).